Reading from the N-terminus, the 153-residue chain is TM2 domain-containing protein DDB_G0277895 (153 aa).

In terms of domain architecture, TM2 spans Q3–I50. The next 2 membrane-spanning stretches (helical) occupy residues V6–L26 and V33–I53. The segment at G85 to Q153 is disordered. A run of 6 repeats spans residues Q89–P96, Q97–P104, Q105–P112, Q113–P120, Q121–P128, and P129–P136. A 6 X 8 AA tandem repeat of Q-Q-P-Y-G-A-P-P region spans residues Q89–P136. Residues G93–Q153 are compositionally biased toward pro residues.

This sequence belongs to the TM2 family.

It localises to the membrane. The protein is TM2 domain-containing protein DDB_G0277895 of Dictyostelium discoideum (Social amoeba).